The following is a 120-amino-acid chain: Methylglyoxal synthase (120 aa).

The MGS-like domain occupies 1 to 120 (MRIALIAHDN…TAEILVESVL (120 aa)). Residues His8, Lys12, and 54–55 (SG) each bind substrate. The active-site Proton donor/acceptor is the Asp60. His87 contributes to the substrate binding site.

It belongs to the methylglyoxal synthase family.

It catalyses the reaction dihydroxyacetone phosphate = methylglyoxal + phosphate. Its function is as follows. Catalyzes the formation of methylglyoxal from dihydroxyacetone phosphate. The sequence is that of Methylglyoxal synthase from Natranaerobius thermophilus (strain ATCC BAA-1301 / DSM 18059 / JW/NM-WN-LF).